A 78-amino-acid polypeptide reads, in one-letter code: Large ribosomal subunit protein eL20 (78 aa).

The protein belongs to the eukaryotic ribosomal protein eL20 family. Part of the 50S ribosomal subunit. Binds 23S rRNA.

In Pyrobaculum neutrophilum (strain DSM 2338 / JCM 9278 / NBRC 100436 / V24Sta) (Thermoproteus neutrophilus), this protein is Large ribosomal subunit protein eL20.